We begin with the raw amino-acid sequence, 287 residues long: Probable ribosomal RNA small subunit methyltransferase A (287 aa).

The S-adenosyl-L-methionine site is built by His-29, Leu-31, Gly-56, Glu-77, Asp-102, and Asn-117.

Belongs to the class I-like SAM-binding methyltransferase superfamily. rRNA adenine N(6)-methyltransferase family. RsmA subfamily.

It is found in the cytoplasm. In terms of biological role, specifically dimethylates two adjacent adenosines in the loop of a conserved hairpin near the 3'-end of 16S rRNA in the 30S particle. May play a critical role in biogenesis of 30S subunits. This Methanosarcina barkeri (strain Fusaro / DSM 804) protein is Probable ribosomal RNA small subunit methyltransferase A.